The sequence spans 242 residues: Galectin-3 (242 aa).

The segment at methionine 1–glycine 35 is disordered. N-acetylalanine is present on alanine 2. Serine 6 carries the phosphoserine; by CK1 modification. Serine 12 bears the Phosphoserine mark. The segment covering proline 17–alanine 31 has biased composition (low complexity). Tandem repeats lie at residues glycine 35–glycine 43, alanine 44–alanine 52, tyrosine 53–proline 61, and tyrosine 62–alanine 70. Residues glycine 35–proline 98 form a 7 X 9 AA tandem repeats of Y-P-G-X(3)-P-[GS]-A region. The tract at residues glycine 55 to tyrosine 93 is disordered. The stretch at tyrosine 71–alanine 80 is one 5; approximate repeat. The span at alanine 80 to tyrosine 93 shows a compositional bias: low complexity. The 6; approximate repeat unit spans residues tyrosine 81–alanine 92. A 7; truncated repeat occupies tyrosine 93–proline 98. Residues tyrosine 110–alanine 240 enclose the Galectin domain. Tryptophan 173 to threonine 181 provides a ligand contact to a beta-D-galactoside. Positions arginine 218 to glutamine 233 match the Nuclear export signal motif.

In terms of assembly, probably forms homo- or heterodimers. Interacts with DMBT1. Interacts with CD6 and ALCAM. Forms a complex with the ITGA3, ITGB1 and CSPG4. Interacts with LGALS3BP, LYPD3, ZFTRAF1 and UACA. Interacts with TRIM16; this interaction mediates autophagy of damage endomembranes. Interacts with cargo receptor TMED10; the interaction mediates the translocation from the cytoplasm into the ERGIC (endoplasmic reticulum-Golgi intermediate compartment) and thereby secretion. Interacts with and inhibits by binding NCR3/NKp30.

It is found in the cytoplasm. The protein localises to the nucleus. The protein resides in the secreted. Galactose-specific lectin which binds IgE. May mediate with the alpha-3, beta-1 integrin the stimulation by CSPG4 of endothelial cells migration. Together with DMBT1, required for terminal differentiation of columnar epithelial cells during early embryogenesis. In the nucleus: acts as a pre-mRNA splicing factor. Involved in acute inflammatory responses including neutrophil activation and adhesion, chemoattraction of monocytes macrophages, opsonization of apoptotic neutrophils, and activation of mast cells. Together with TRIM16, coordinates the recognition of membrane damage with mobilization of the core autophagy regulators ATG16L1 and BECN1 in response to damaged endomembranes. When secreted, interacts with NK cell-activating receptor NCR3/NKp30 acting as an inhibitory ligand which antagonizes NK cell attack. The polypeptide is Galectin-3 (LGALS3) (Oryctolagus cuniculus (Rabbit)).